Consider the following 423-residue polypeptide: D-tagatose-1,6-bisphosphate aldolase subunit GatZ (423 aa).

The protein belongs to the GatZ/KbaZ family. GatZ subfamily. Forms a complex with GatY.

It functions in the pathway carbohydrate metabolism; D-tagatose 6-phosphate degradation; D-glyceraldehyde 3-phosphate and glycerone phosphate from D-tagatose 6-phosphate: step 2/2. Component of the tagatose-1,6-bisphosphate aldolase GatYZ that is required for full activity and stability of the Y subunit. Could have a chaperone-like function for the proper and stable folding of GatY. When expressed alone, GatZ does not show any aldolase activity. Is involved in the catabolism of galactitol. In Salmonella dublin (strain CT_02021853), this protein is D-tagatose-1,6-bisphosphate aldolase subunit GatZ.